The primary structure comprises 338 residues: Glyceraldehyde-3-phosphate dehydrogenase 1 (338 aa).

Residues 13–14 (TI) and glycine 111 contribute to the NAD(+) site. 140–142 (SCN) is a D-glyceraldehyde 3-phosphate binding site. Cysteine 141 functions as the Nucleophile in the catalytic mechanism. Arginine 169 lines the NAD(+) pocket. 195-196 (HG) is a binding site for D-glyceraldehyde 3-phosphate. Glutamine 300 provides a ligand contact to NAD(+).

It belongs to the glyceraldehyde-3-phosphate dehydrogenase family. Homotetramer.

It is found in the cytoplasm. The enzyme catalyses D-glyceraldehyde 3-phosphate + phosphate + NADP(+) = (2R)-3-phospho-glyceroyl phosphate + NADPH + H(+). It carries out the reaction D-glyceraldehyde 3-phosphate + phosphate + NAD(+) = (2R)-3-phospho-glyceroyl phosphate + NADH + H(+). The protein operates within carbohydrate degradation; glycolysis; pyruvate from D-glyceraldehyde 3-phosphate: step 1/5. This chain is Glyceraldehyde-3-phosphate dehydrogenase 1, found in Methanosarcina barkeri (strain Fusaro / DSM 804).